The primary structure comprises 356 residues: D-alanine--D-alanine ligase (356 aa).

An ATP-grasp domain is found at 146 to 350 (KKLLVAEGLP…YAELLDTLIQ (205 aa)). 173–228 (KERLGLPVFVKPARGGSSIGVSKVSAWEDLEAALTLAYESDDKVLIEPEISGAEVE) is an ATP binding site. Positions 305, 317, and 319 each coordinate Mg(2+).

This sequence belongs to the D-alanine--D-alanine ligase family. Mg(2+) is required as a cofactor. The cofactor is Mn(2+).

It localises to the cytoplasm. The enzyme catalyses 2 D-alanine + ATP = D-alanyl-D-alanine + ADP + phosphate + H(+). Its pathway is cell wall biogenesis; peptidoglycan biosynthesis. In terms of biological role, cell wall formation. The protein is D-alanine--D-alanine ligase of Corynebacterium aurimucosum (strain ATCC 700975 / DSM 44827 / CIP 107346 / CN-1) (Corynebacterium nigricans).